A 246-amino-acid chain; its full sequence is High mobility group protein 1 (246 aa).

A DNA-binding region (HMG box) is located at residues 106–179 (PKKPLTVFFA…NYQREKSKYL (74 aa)). The segment at 179-246 (LEAKKNGTLP…KKKDKSNSSI (68 aa)) is disordered. Over residues 214-227 (PVEKRPHDDDGSSE) the composition is skewed to basic and acidic residues. Positions 228 to 238 (KKKKKKKKDKK) are enriched in basic residues.

As to quaternary structure, interacts with FPR1. Interacts with an unidentified DNA helicase. Associates with rDNA.

The protein localises to the nucleus. The protein resides in the nucleolus. In terms of biological role, DNA-binding protein that is probably part of the rDNA transcription apparatus. Acts synergetically with the RPA49 subunit of RNA polymerase I during rDNA transcription. May participate in mutagenesis control. This is High mobility group protein 1 (HMO1) from Saccharomyces cerevisiae (strain ATCC 204508 / S288c) (Baker's yeast).